Reading from the N-terminus, the 497-residue chain is MFNHDWKYSINSKTFADLNIELFRNHKFKTVLNYIIGVVGWNGLKLALFVSDIYTCIKLLAFNSWSNNIIKPYLPFKISKWLFSGCILASIVLLIWEAIAGMRIYKTGNISLTYVNNFSRNLNSVLNYSKFCVYNMIERKGFRQKMTFFTFFQLKDCIRLIFTDTPRQVINGLTLWSVLVTVNKNEDLGDLESFTGLINKIKNIGQTNHEEAVILSLMLFSFIIWALFVFKFLLAVICSIFVYYKIINDQEYSGLREYICVTVSENVDELVERQRKKENDDTIYKTGLLESQTFDDFKEVENKIETSFNDTSYASNNDSMIELIERRPEYKSQDVCGPIPTMKKTETMESFVDNGNPQYTTRFSAILDSPYINSYESNDIKKAKIQSRSVNTPKYEDLSSSDIFNKIHSAGQLKSTTSMEFHGPLDSMPNTTNNIRNFNSNSSRPRPPPLQTKSSINSKADSNDNGRIYTPMKAYFREPDLPRKGLLEDEDRTYNYT.

Over 1-29 (MFNHDWKYSINSKTFADLNIELFRNHKFK) the chain is Extracellular. The helical transmembrane segment at 30-50 (TVLNYIIGVVGWNGLKLALFV) threads the bilayer. Over 51–80 (SDIYTCIKLLAFNSWSNNIIKPYLPFKISK) the chain is Cytoplasmic. Residues 81–101 (WLFSGCILASIVLLIWEAIAG) form a helical membrane-spanning segment. At 102–216 (MRIYKTGNIS…TNHEEAVILS (115 aa)) the chain is on the extracellular side. A helical transmembrane segment spans residues 217-237 (LMLFSFIIWALFVFKFLLAVI). Over 238 to 497 (CSIFVYYKII…EDEDRTYNYT (260 aa)) the chain is Cytoplasmic. S291 and S319 each carry phosphoserine. The segment at 420 to 469 (EFHGPLDSMPNTTNNIRNFNSNSSRPRPPPLQTKSSINSKADSNDNGRIY) is disordered. The segment covering 429–444 (PNTTNNIRNFNSNSSR) has biased composition (low complexity). Residues 451–465 (QTKSSINSKADSNDN) show a composition bias toward polar residues.

This sequence belongs to the KCH1 low affinity K(+) transporter family.

It is found in the vacuole membrane. The protein localises to the cell membrane. The enzyme catalyses K(+)(in) = K(+)(out). Low affinity potassium transporter that, with PRM6/KCH2, participates in high-affinity Ca(2+) influx system (HACS) activation during the response to mating pheromone. Directly promotes K(+) influx and HACS may electrochemically respond to this K(+) influx. KCH1 and KCH2 act at the apex of the calcium signaling pathway that is used for survival during prolonged exposures to mating pheromones. The sequence is that of Low affinity K(+) transporter 1 from Saccharomyces cerevisiae (strain ATCC 204508 / S288c) (Baker's yeast).